Here is a 188-residue protein sequence, read N- to C-terminus: Molybdopterin synthase catalytic subunit (188 aa).

The segment covering 1–10 (MSTSETSSYT) has biased composition (polar residues). A disordered region spans residues 1–21 (MSTSETSSYTPDIPSEPVTKT). Substrate-binding positions include 123–124 (HR), lysine 139, and 146–148 (KLE).

It belongs to the MoaE family. MOCS2B subfamily. In terms of assembly, heterotetramer; composed of 2 small (MOCS2A) and 2 large (MOCS2B) subunits.

It is found in the cytoplasm. It carries out the reaction 2 [molybdopterin-synthase sulfur-carrier protein]-C-terminal-Gly-aminoethanethioate + cyclic pyranopterin phosphate + H2O = molybdopterin + 2 [molybdopterin-synthase sulfur-carrier protein]-C-terminal Gly-Gly + 2 H(+). It functions in the pathway cofactor biosynthesis; molybdopterin biosynthesis. Functionally, catalytic subunit of the molybdopterin synthase complex, a complex that catalyzes the conversion of precursor Z into molybdopterin. Acts by mediating the incorporation of 2 sulfur atoms from thiocarboxylated MOCS2A into precursor Z to generate a dithiolene group. In Phaeosphaeria nodorum (strain SN15 / ATCC MYA-4574 / FGSC 10173) (Glume blotch fungus), this protein is Molybdopterin synthase catalytic subunit.